Consider the following 466-residue polypeptide: Asparagine--tRNA ligase (466 aa).

It belongs to the class-II aminoacyl-tRNA synthetase family. As to quaternary structure, homodimer.

It is found in the cytoplasm. It catalyses the reaction tRNA(Asn) + L-asparagine + ATP = L-asparaginyl-tRNA(Asn) + AMP + diphosphate + H(+). The chain is Asparagine--tRNA ligase from Shewanella sp. (strain MR-7).